Reading from the N-terminus, the 362-residue chain is tRNA N6-adenosine threonylcarbamoyltransferase (362 aa).

Fe cation contacts are provided by histidine 120 and histidine 124. Residues 142 to 146, aspartate 175, glycine 188, and asparagine 288 contribute to the substrate site; that span reads LASGG. Position 316 (aspartate 316) interacts with Fe cation. The span at 342 to 351 shows a compositional bias: basic and acidic residues; it reads RPRWPLDPDA. The segment at 342 to 362 is disordered; sequence RPRWPLDPDAPKAAGAGGVKA.

This sequence belongs to the KAE1 / TsaD family. The cofactor is Fe(2+).

It localises to the cytoplasm. It catalyses the reaction L-threonylcarbamoyladenylate + adenosine(37) in tRNA = N(6)-L-threonylcarbamoyladenosine(37) in tRNA + AMP + H(+). Required for the formation of a threonylcarbamoyl group on adenosine at position 37 (t(6)A37) in tRNAs that read codons beginning with adenine. Is involved in the transfer of the threonylcarbamoyl moiety of threonylcarbamoyl-AMP (TC-AMP) to the N6 group of A37, together with TsaE and TsaB. TsaD likely plays a direct catalytic role in this reaction. The protein is tRNA N6-adenosine threonylcarbamoyltransferase of Rhodospirillum rubrum (strain ATCC 11170 / ATH 1.1.1 / DSM 467 / LMG 4362 / NCIMB 8255 / S1).